Reading from the N-terminus, the 227-residue chain is MMTSFFDQFASPYLLGIPLILVAMLLPWLLFPAPTSRWINNRLITVQTWLTGRFTNQLMTPLNFSGHKWALLFASLMVFLITINLLGLLPYTFTPTTQLSLNMGFAVPLWLATVIIGMKNQPTIALGHLLPEGTPIPLIPALIIIETISLFIRPLALGVRLTANLTAGHLLIQLIATAVFVLLPMMPAVAILTASVLFLLTLLEVAVAMIQAYVFILLLSLYLQENI.

Helical transmembrane passes span 13–33 (YLLG…LFPA), 69–89 (WALL…LGLL), 98–118 (QLSL…IIGM), 132–152 (EGTP…SLFI), 179–199 (VFVL…VLFL), and 202–222 (LLEV…LSLY).

The protein belongs to the ATPase A chain family. In terms of assembly, component of the ATP synthase complex composed at least of ATP5F1A/subunit alpha, ATP5F1B/subunit beta, ATP5MC1/subunit c (homooctomer), MT-ATP6/subunit a, MT-ATP8/subunit 8, ATP5ME/subunit e, ATP5MF/subunit f, ATP5MG/subunit g, ATP5MK/subunit k, ATP5MJ/subunit j, ATP5F1C/subunit gamma, ATP5F1D/subunit delta, ATP5F1E/subunit epsilon, ATP5PF/subunit F6, ATP5PB/subunit b, ATP5PD/subunit d, ATP5PO/subunit OSCP. ATP synthase complex consists of a soluble F(1) head domain (subunits alpha(3) and beta(3)) - the catalytic core - and a membrane F(0) domain - the membrane proton channel (subunits c, a, 8, e, f, g, k and j). These two domains are linked by a central stalk (subunits gamma, delta, and epsilon) rotating inside the F1 region and a stationary peripheral stalk (subunits F6, b, d, and OSCP). Interacts with DNAJC30; interaction is direct.

The protein resides in the mitochondrion inner membrane. The enzyme catalyses H(+)(in) = H(+)(out). Subunit a, of the mitochondrial membrane ATP synthase complex (F(1)F(0) ATP synthase or Complex V) that produces ATP from ADP in the presence of a proton gradient across the membrane which is generated by electron transport complexes of the respiratory chain. ATP synthase complex consist of a soluble F(1) head domain - the catalytic core - and a membrane F(1) domain - the membrane proton channel. These two domains are linked by a central stalk rotating inside the F(1) region and a stationary peripheral stalk. During catalysis, ATP synthesis in the catalytic domain of F(1) is coupled via a rotary mechanism of the central stalk subunits to proton translocation. With the subunit c (ATP5MC1), forms the proton-conducting channel in the F(0) domain, that contains two crucial half-channels (inlet and outlet) that facilitate proton movement from the mitochondrial intermembrane space (IMS) into the matrix. Protons are taken up via the inlet half-channel and released through the outlet half-channel, following a Grotthuss mechanism. The protein is ATP synthase F(0) complex subunit a of Danio rerio (Zebrafish).